Reading from the N-terminus, the 427-residue chain is 11-beta-hydroxysteroid dehydrogenase type 2 (427 aa).

82-111 (TRAVLITGCDSGFGNATAKKLDAMGFTVLA) is a binding site for NAD(+). Residue Ser219 participates in substrate binding. The Proton acceptor role is filled by Tyr232.

It belongs to the short-chain dehydrogenases/reductases (SDR) family. As to quaternary structure, interacts with ligand-free cytoplasmic NR3C2. As to expression, highly expressed in the kidney and adrenal and at lower levels in the colon.

The protein resides in the microsome. The protein localises to the endoplasmic reticulum. The enzyme catalyses an 11beta-hydroxysteroid + NAD(+) = an 11-oxosteroid + NADH + H(+). It catalyses the reaction corticosterone + NAD(+) = 11-dehydrocorticosterone + NADH + H(+). The catalysed reaction is cortisol + NAD(+) = cortisone + NADH + H(+). It carries out the reaction 11beta,17beta-dihydroxyandrost-4-ene-3-one + NAD(+) = 17beta-hydroxyandrost-4-ene-3,11-dione + NADH + H(+). The enzyme catalyses 11beta-hydroxyandrost-4-ene-3,17-dione + NAD(+) = androst-4-ene-3,11,17-trione + NADH + H(+). Its pathway is steroid metabolism. With respect to regulation, inhibited by glycyrrhetinic acid, carbenoloxone, 11-alpha-OH-progesterone and 11-beta-OH-progesterone. Its function is as follows. Catalyzes the conversion of biologically active 11beta-hydroxyglucocorticoids (11beta-hydroxysteroid) such as cortisol, to inactive 11-ketoglucocorticoids (11-oxosteroid) such as cortisone, in the presence of NAD(+). Functions as a dehydrogenase (oxidase), thereby decreasing the concentration of active glucocorticoids, thus protecting the nonselective mineralocorticoid receptor from occupation by glucocorticoids. Plays an important role in maintaining glucocorticoids balance during preimplantation and protects the fetus from excessive maternal corticosterone exposure. Catalyzes the oxidation of 11beta-hydroxytestosterone (11beta,17beta-dihydroxyandrost-4-ene-3-one) to 11-ketotestosterone (17beta-hydroxyandrost-4-ene-3,11-dione), a major bioactive androgen. Catalyzes the conversion of 11beta-hydroxyandrostenedione (11beta-hydroxyandrost-4-ene-3,17-dione) to 11-ketoandrostenedione (androst-4-ene-3,11,17-trione), which can be further metabolized to 11-ketotestosterone. Converts 7-beta-25-dihydroxycholesterol to 7-oxo-25-hydroxycholesterol in vitro. 7-beta-25-dihydroxycholesterol (not 7-oxo-25-hydroxycholesterol) acts as a ligand for the G-protein-coupled receptor (GPCR) Epstein-Barr virus-induced gene 2 (EBI2) and may thereby regulate immune cell migration. May protect ovulating oocytes and fertilizing spermatozoa from the adverse effects of cortisol. The protein is 11-beta-hydroxysteroid dehydrogenase type 2 (HSD11B2) of Ovis aries (Sheep).